Reading from the N-terminus, the 70-residue chain is Putative membrane protein insertion efficiency factor (70 aa).

Belongs to the UPF0161 family.

It is found in the cell membrane. In terms of biological role, could be involved in insertion of integral membrane proteins into the membrane. This Clostridium novyi (strain NT) protein is Putative membrane protein insertion efficiency factor.